The sequence spans 1082 residues: Error-prone DNA polymerase (1082 aa).

Belongs to the DNA polymerase type-C family. DnaE2 subfamily.

Its subcellular location is the cytoplasm. The enzyme catalyses DNA(n) + a 2'-deoxyribonucleoside 5'-triphosphate = DNA(n+1) + diphosphate. In terms of biological role, DNA polymerase involved in damage-induced mutagenesis and translesion synthesis (TLS). It is not the major replicative DNA polymerase. This Xanthomonas campestris pv. campestris (strain B100) protein is Error-prone DNA polymerase.